We begin with the raw amino-acid sequence, 391 residues long: MLDTGELRERFQQHYGIHPHVIVRAPGRVNLIGEHTDYNDGFVFPVAIDRATCVAARPRTDRIVRVMAADLHDEDLFSIDQIERSNRAWHNYIRGVVLALRTAGHTLSGADMLIASDVPRGAGLSSSAALEVAVAYTFQVLNRLNILGEELALLAQGAENTFVGVQCGIMDQLIAVFGRADHALLIDCRDLTYRAVPLPPSVAVVVCDSHIARTLAASAYNQRRQECDAAVRALQQWYPGIRALRDVSEDQLAAHQHELPEPLRARARHVVSENRRALQGAAALEAGDIATFGRLMNESHASLRDDYQVSLPDIDFLVTTAQSLAGCYGSRLTGAGFGGCTVSLVERSSVETFRHDLAQAYHDATGRTATIYVCRASDGVGRVMDNARPQE.

34-37 contacts substrate; sequence EHTD. Residue 121–127 coordinates ATP; that stretch reads GAGLSSS. The Mg(2+) site is built by serine 127 and glutamate 159. Catalysis depends on aspartate 171, which acts as the Proton acceptor. Tyrosine 220 provides a ligand contact to substrate.

Belongs to the GHMP kinase family. GalK subfamily.

Its subcellular location is the cytoplasm. The catalysed reaction is alpha-D-galactose + ATP = alpha-D-galactose 1-phosphate + ADP + H(+). It participates in carbohydrate metabolism; galactose metabolism. Catalyzes the transfer of the gamma-phosphate of ATP to D-galactose to form alpha-D-galactose-1-phosphate (Gal-1-P). The polypeptide is Galactokinase (Roseiflexus sp. (strain RS-1)).